We begin with the raw amino-acid sequence, 170 residues long: uncharacterized protein (170 aa).

The segment at 35–57 is disordered; it reads EEVMPATAPSTDPAVPKDAQEAD.

This is an uncharacterized protein from Candida tsukubaensis (Yeast).